The following is a 362-amino-acid chain: Uracil-DNA glycosylase (362 aa).

The tract at residues 28–97 (ASVAPNDPTE…AGPTEDPNFA (70 aa)) is disordered. Aspartate 205 (proton acceptor) is an active-site residue.

This sequence belongs to the uracil-DNA glycosylase (UDG) superfamily. UNG family.

It is found in the host nucleus. The catalysed reaction is Hydrolyzes single-stranded DNA or mismatched double-stranded DNA and polynucleotides, releasing free uracil.. Its function is as follows. Excises uracil residues from the DNA which can arise as a result of misincorporation of dUMP residues by DNA polymerase or deamination of cytosines. Therefore may reduce deleterious uracil incorporation into the viral genome, particularly in terminally differentiated cells which lack DNA repair enzymes. The polypeptide is Uracil-DNA glycosylase (UL2) (Psittacid herpesvirus 1 (isolate Amazon parrot/-/97-0001/1997) (PsHV-1)).